The sequence spans 318 residues: Homoserine kinase (318 aa).

An ATP-binding site is contributed by 97-107 (PIGSGLGSSAC).

This sequence belongs to the GHMP kinase family. Homoserine kinase subfamily.

It is found in the cytoplasm. The enzyme catalyses L-homoserine + ATP = O-phospho-L-homoserine + ADP + H(+). The protein operates within amino-acid biosynthesis; L-threonine biosynthesis; L-threonine from L-aspartate: step 4/5. Catalyzes the ATP-dependent phosphorylation of L-homoserine to L-homoserine phosphate. This chain is Homoserine kinase, found in Vibrio atlanticus (strain LGP32) (Vibrio splendidus (strain Mel32)).